We begin with the raw amino-acid sequence, 336 residues long: Cytosolic Fe-S cluster assembly factor NBP35 (336 aa).

Residues 1–20 (MIATQRPFPIPSPVPLAPSS) form a disordered region. Residues C35, C49, C52, and C58 each coordinate [4Fe-4S] cluster. 88-95 (GKGGVGKS) lines the ATP pocket. 2 residues coordinate [4Fe-4S] cluster: C261 and C264.

It belongs to the Mrp/NBP35 ATP-binding proteins family. NUBP1/NBP35 subfamily. As to quaternary structure, heterotetramer of 2 NBP35 and 2 CFD1 chains. [4Fe-4S] cluster serves as cofactor.

The protein localises to the cytoplasm. In terms of biological role, component of the cytosolic iron-sulfur (Fe/S) protein assembly (CIA) machinery. Required for maturation of extramitochondrial Fe-S proteins. The NBP35-CFD1 heterotetramer forms a Fe-S scaffold complex, mediating the de novo assembly of an Fe-S cluster and its transfer to target apoproteins. This chain is Cytosolic Fe-S cluster assembly factor NBP35, found in Cryptococcus neoformans var. neoformans serotype D (strain B-3501A) (Filobasidiella neoformans).